Reading from the N-terminus, the 606-residue chain is Proton myo-inositol cotransporter hmit-1.1 (606 aa).

The Cytoplasmic segment spans residues 1–20 (MVAVAAFSSSGQDKPAHTPK). The chain crosses the membrane as a helical span at residues 21–41 (LGLFVYILAAASVIGGFLFGY). The Extracellular segment spans residues 42 to 63 (DTSVVSAAMLYMPDAPGLKPMD). The helical transmembrane segment at 64–84 (TVWQEVLVSISPGMAAVGSLM) threads the bilayer. The Cytoplasmic portion of the chain corresponds to 85–96 (SGTSSDYIGRRK). A helical membrane pass occupies residues 97–117 (VILGASAIFTIGALVCAASVN). Residue K118 is a topological domain, extracellular. The chain crosses the membrane as a helical span at residues 119–139 (IMLLVGRVLLGIAIGFASMIV). Over 140–152 (PVYLGETAPTHVR) the chain is Cytoplasmic. A helical membrane pass occupies residues 153 to 173 (GMLVAAFALMISFGQVVANIT). Residues 174–188 (GGAFSYIDPYNVGWR) lie on the Extracellular side of the membrane. The helical transmembrane segment at 189 to 209 (LMFAFAAVPSIIQFVCFMFLP) threads the bilayer. Topologically, residues 210-278 (ETPRWLYENG…RILKTPHVLK (69 aa)) are cytoplasmic. The chain crosses the membrane as a helical span at residues 279-299 (ACFIGSMLQAFQQLAGINTIL). Residues 300-317 (YYTADIIRSSGISNNHTT) lie on the Extracellular side of the membrane. An N-linked (GlcNAc...) asparagine glycan is attached at N314. Residues 318–338 (IWISVLLSLCNFIGPFVPMSL) form a helical membrane-spanning segment. Topologically, residues 339–345 (IEKVGRR) are cytoplasmic. Residues 346–366 (IIFLFSCGLVVLSLVFIGVAF) traverse the membrane as a helical segment. Over 367–464 (LLVNHDSAAT…EKYYCDTKYT (98 aa)) the chain is Extracellular. Residues N387 and N445 are each glycosylated (N-linked (GlcNAc...) asparagine). The helical transmembrane segment at 465-485 (LLPIIACGVYLLTFSSGFTSL) threads the bilayer. At 486–501 (PWVLNSEFYPMWARST) the chain is on the cytoplasmic side. The helical transmembrane segment at 502 to 522 (CVAISTTSNWVFNLIIALTYL) threads the bilayer. Residues 523-531 (SLTQVIGKY) lie on the Extracellular side of the membrane. Residues 532–552 (GAFWLYAGLTVIAFIFILFLV) traverse the membrane as a helical segment. Residues 553 to 606 (PETKGYSIEEVEMLFMNKKQRREAESRRRETVTEVRSRMNSTVSFGQHNEVHKY) lie on the Cytoplasmic side of the membrane.

It belongs to the major facilitator superfamily. Sugar transporter (TC 2.A.1.1) family. As to expression, expressed in the intestine.

Its subcellular location is the cell membrane. It catalyses the reaction myo-inositol(out) + H(+)(out) = myo-inositol(in) + H(+)(in). Its function is as follows. H(+)-myo-inositol cotransporter. Probably by promoting the transport of myo-inositol regulates intracellular osmosis in response to hyperosmotic stress. In Caenorhabditis elegans, this protein is Proton myo-inositol cotransporter hmit-1.1.